Here is a 157-residue protein sequence, read N- to C-terminus: Endoribonuclease YbeY (157 aa).

Zn(2+) contacts are provided by H114, H118, and H124.

Belongs to the endoribonuclease YbeY family. Requires Zn(2+) as cofactor.

The protein resides in the cytoplasm. Single strand-specific metallo-endoribonuclease involved in late-stage 70S ribosome quality control and in maturation of the 3' terminus of the 16S rRNA. This Salmonella agona (strain SL483) protein is Endoribonuclease YbeY.